A 469-amino-acid chain; its full sequence is Sorting and assembly machinery component 50 homolog (469 aa).

Residues 45–125 (VVVQHVHFDG…LDVTFEVTEL (81 aa)) form the POTRA domain. Lysine 255 bears the N6-methyllysine mark.

The protein belongs to the SAM50/omp85 family. Associates with the mitochondrial contact site and cristae organizing system (MICOS) complex, composed of at least MICOS10/MIC10, CHCHD3/MIC19, CHCHD6/MIC25, APOOL/MIC27, IMMT/MIC60, APOO/MIC23/MIC26 and QIL1/MIC13. This complex was also known under the names MINOS or MitOS complex. The MICOS complex associates with mitochondrial outer membrane proteins SAMM50, MTX1 and MTX2 (together described as components of the mitochondrial outer membrane sorting assembly machinery (SAM) complex) and DNAJC11, mitochondrial inner membrane protein TMEM11 and with HSPA9. The MICOS and SAM complexes together with DNAJC11 are part of a large protein complex spanning both membranes termed the mitochondrial intermembrane space bridging (MIB) complex. Interacts with IMMT/MIC60. Interacts with CHCHD3/MIC19. Interacts with ARMC1. As to quaternary structure, (Microbial infection) Interacts with parasite T.gondii RH strain MAF1b1; the interaction is probably indirect and results in the disruption of the MIB complex and the formation of SPOTs (structures positive for outer mitochondrial membrane (OMM)), a cellular response to OMM stress, which leads to the constitutive shedding of OMM vesicles.

The protein localises to the mitochondrion outer membrane. It is found in the cytoplasm. Its subcellular location is the mitochondrion. In terms of biological role, plays a crucial role in the maintenance of the structure of mitochondrial cristae and the proper assembly of the mitochondrial respiratory chain complexes. Required for the assembly of TOMM40 into the TOM complex. This chain is Sorting and assembly machinery component 50 homolog (Samm50), found in Mus musculus (Mouse).